We begin with the raw amino-acid sequence, 371 residues long: Chorismate synthase (371 aa).

Arginine 48 and arginine 54 together coordinate NADP(+). FMN-binding positions include 125-127, 238-239, glycine 278, 293-297, and arginine 319; these read RSS, NA, and KPTSS.

The protein belongs to the chorismate synthase family. Homotetramer. FMNH2 serves as cofactor.

The catalysed reaction is 5-O-(1-carboxyvinyl)-3-phosphoshikimate = chorismate + phosphate. Its pathway is metabolic intermediate biosynthesis; chorismate biosynthesis; chorismate from D-erythrose 4-phosphate and phosphoenolpyruvate: step 7/7. Functionally, catalyzes the anti-1,4-elimination of the C-3 phosphate and the C-6 proR hydrogen from 5-enolpyruvylshikimate-3-phosphate (EPSP) to yield chorismate, which is the branch point compound that serves as the starting substrate for the three terminal pathways of aromatic amino acid biosynthesis. This reaction introduces a second double bond into the aromatic ring system. The chain is Chorismate synthase from Polynucleobacter asymbioticus (strain DSM 18221 / CIP 109841 / QLW-P1DMWA-1) (Polynucleobacter necessarius subsp. asymbioticus).